Here is a 488-residue protein sequence, read N- to C-terminus: Cysteine desulfurase, mitochondrial (488 aa).

Residues 25–52 (LPKPLATSSSPATNAPNKTSNPKTGELH) form a disordered region. Residues 30–47 (ATSSSPATNAPNKTSNPK) show a composition bias toward polar residues. Pyridoxal 5'-phosphate contacts are provided by residues 157–158 (AT), Asn-237, Gln-265, and 285–287 (SSH). Lys-288 is modified (N6-(pyridoxal phosphate)lysine). Thr-325 provides a ligand contact to pyridoxal 5'-phosphate. Cys-412 serves as the catalytic Cysteine persulfide intermediate. Cys-412 is a binding site for [2Fe-2S] cluster.

It belongs to the class-V pyridoxal-phosphate-dependent aminotransferase family. NifS/IscS subfamily. The cofactor is pyridoxal 5'-phosphate.

Its subcellular location is the mitochondrion. It catalyses the reaction (sulfur carrier)-H + L-cysteine = (sulfur carrier)-SH + L-alanine. Functionally, catalyzes the removal of elemental sulfur from cysteine to produce alanine. It supplies the inorganic sulfur for iron-sulfur (Fe-S) clusters. Plays a role in both tRNA-processing and mitochondrial metabolism. Involved in the 2-thio-modification of both 5-carboxymethylaminomethyl-2-thiouridine in mitochondrial tRNAs and 5-methoxycarbonylmethyl-2-thiouridine (mcm5s2U) in cytoplasmic tRNAs. This is Cysteine desulfurase, mitochondrial (NFS1) from Candida albicans (strain SC5314 / ATCC MYA-2876) (Yeast).